A 511-amino-acid chain; its full sequence is Coatomer subunit delta (511 aa).

A compositionally biased stretch (basic and acidic residues) spans 168-177; sequence QARRDAERQG. Positions 168 to 188 are disordered; that stretch reads QARRDAERQGKKAPGFGGFGS. Residue Ser-223 is modified to Phosphoserine. 2 positions are modified to N6-acetyllysine: Lys-233 and Lys-241. Residue Ser-244 is modified to Phosphoserine. Residues 271–511 enclose the MHD domain; the sequence is MESVHMKIEE…TFLVDKYEIL (241 aa). N6-acetyllysine is present on residues Lys-309 and Lys-351. Ser-493 is subject to Phosphoserine.

Belongs to the adaptor complexes medium subunit family. Delta-COP subfamily. In terms of assembly, oligomeric complex that consists of at least the alpha, beta, beta', gamma, delta, epsilon and zeta subunits. As to expression, ubiquitously expressed.

Its subcellular location is the cytoplasm. It localises to the golgi apparatus membrane. It is found in the cytoplasmic vesicle. The protein localises to the COPI-coated vesicle membrane. Component of the coatomer, a cytosolic protein complex that binds to dilysine motifs and reversibly associates with Golgi non-clathrin-coated vesicles, which further mediate biosynthetic protein transport from the ER, via the Golgi up to the trans Golgi network. The coatomer complex is required for budding from Golgi membranes, and is essential for the retrograde Golgi-to-ER transport of dilysine-tagged proteins. In mammals, the coatomer can only be recruited by membranes associated to ADP-ribosylation factors (ARFs), which are small GTP-binding proteins; the complex also influences the Golgi structural integrity, as well as the processing, activity, and endocytic recycling of LDL receptors. The protein is Coatomer subunit delta (ARCN1) of Homo sapiens (Human).